A 199-amino-acid polypeptide reads, in one-letter code: NAD(P)H dehydrogenase (quinone) (199 aa).

One can recognise a Flavodoxin-like domain in the interval Ile-4 to Val-190. FMN is bound by residues Ser-10–Ile-15 and Thr-79–Phe-81. Tyr-12 serves as a coordination point for NAD(+). Trp-99 contributes to the substrate binding site. FMN-binding positions include Ser-114–Gly-119 and His-134.

The protein belongs to the WrbA family. Requires FMN as cofactor.

The catalysed reaction is a quinone + NADH + H(+) = a quinol + NAD(+). The enzyme catalyses a quinone + NADPH + H(+) = a quinol + NADP(+). The sequence is that of NAD(P)H dehydrogenase (quinone) from Yersinia enterocolitica serotype O:8 / biotype 1B (strain NCTC 13174 / 8081).